The chain runs to 618 residues: Carotenoid cleavage dioxygenase 7, chloroplastic (618 aa).

Residues 1-31 (MSLPIPPKFLPPLKSPPIHHHQTPPPLAPPR) constitute a chloroplast transit peptide. The disordered stretch occupies residues 11–34 (PPLKSPPIHHHQTPPPLAPPRAAI). Positions 266, 319, 398, and 612 each coordinate Fe cation.

The protein belongs to the carotenoid oxygenase family. Requires Fe(2+) as cofactor. As to expression, expressed in flowers, siliques, inflorescence stems, petiole, leaves and roots.

The protein localises to the plastid. Its subcellular location is the chloroplast. The enzyme catalyses 9-cis-beta-carotene + O2 = 9-cis-10'-apo-beta-carotenal + beta-ionone. In terms of biological role, involved in strigolactones biosynthesis by cleaving asymmetrically a variety of linear and cyclic carotenoids at the 9-10 double bond. Produces one C(13) beta-ionone and the C(27) 10'-apo-beta-carotenal. Strigolactones are hormones that inhibit tillering and shoot branching through the MAX-dependent pathway, contribute to the regulation of shoot architectural response to phosphate-limiting conditions and function as rhizosphere signal that stimulates hyphal branching of arbuscular mycorrhizal fungi and trigger seed germination of root parasitic weeds. No activity on lycopene, lutein, zeaxanthin, violaxanthin or neoxanthin. Probably not involved in abscisic acid biosynthesis. This Arabidopsis thaliana (Mouse-ear cress) protein is Carotenoid cleavage dioxygenase 7, chloroplastic (CCD7).